Consider the following 250-residue polypeptide: Ubiquinone/menaquinone biosynthesis C-methyltransferase UbiE (250 aa).

S-adenosyl-L-methionine contacts are provided by residues Thr-73, Asp-94, 122 to 123 (NA), and Ser-139.

This sequence belongs to the class I-like SAM-binding methyltransferase superfamily. MenG/UbiE family.

It carries out the reaction a 2-demethylmenaquinol + S-adenosyl-L-methionine = a menaquinol + S-adenosyl-L-homocysteine + H(+). It catalyses the reaction a 2-methoxy-6-(all-trans-polyprenyl)benzene-1,4-diol + S-adenosyl-L-methionine = a 5-methoxy-2-methyl-3-(all-trans-polyprenyl)benzene-1,4-diol + S-adenosyl-L-homocysteine + H(+). Its pathway is quinol/quinone metabolism; menaquinone biosynthesis; menaquinol from 1,4-dihydroxy-2-naphthoate: step 2/2. The protein operates within cofactor biosynthesis; ubiquinone biosynthesis. Functionally, methyltransferase required for the conversion of demethylmenaquinol (DMKH2) to menaquinol (MKH2) and the conversion of 2-polyprenyl-6-methoxy-1,4-benzoquinol (DDMQH2) to 2-polyprenyl-3-methyl-6-methoxy-1,4-benzoquinol (DMQH2). In Francisella tularensis subsp. tularensis (strain WY96-3418), this protein is Ubiquinone/menaquinone biosynthesis C-methyltransferase UbiE.